We begin with the raw amino-acid sequence, 833 residues long: MWARNLMARALYDNVPECAEELAFRKGDILTVIEQNTGGLEGWWLCSLHGRQGIVPGNRVKLLIGPVQETPGHEQPTPGPMHQTFGQQKLYQVPNSQAASRDTIYQVPPSYQNQGIYQVPTGHGTPEQDVYQVPPSVQRNIGGTNGPLLSKKVITPVRTGHGYVYEYPSRYQKDVYDVPPSHSTQGVYDIPPSSVKGPVFSVPVGEIKPQGVYDIPPTQGVYAIPPSACRDEAGLREKEYDFPPPMKQDGKPDTRPEGVYDIPPTSTKTAGKDLHIKFPCDAPGGVEPMARRHQSFSLHHAPSQLGQSGDTQSDAYDVPRGVQFLEVPTETSEKANPEERDGVYDVPLHNPADAKGSRDVVDGINRLSFSSTGSTRSNMSTSSTSSKESSLSASPSQDKRLRLDPDTAIEKLYRLQQTLEMGVCSLMSLVTTDWRCYGYMERHINEIRTAVDKVELFLREYLHFAKGALANASCLPELVLHNKMKRELQRVEDSHQILSQTSHDLNECSWSLNILAINKPQNKCDDLDRFVMVAKTVPDDAKQLTTTISTYAETLFRADPANSHLKNGPNSIMNSSEYTHPGSQMQPLHPGDYKAQVHSKPLPPSLSKDQPPDCGSSDGSERSWMDDYDYVHLQGKEEFERQQKELLEKENIMKQSKAQLEHHQLSQFQLLEQEITKPVENDISKWKPSQSLPTTNNSVGAQDRQLLCFYYDQCETHFISLLNAIDALFSCVSSAQPPRIFVAHSKFVILSAHKLVFIGDTLTRQVAAQDIRNKVRNSSNQLCEQLKTIVMATKMAALHYPSTTALQEMVHQVTDLSRNAQLFKRSLLEMATF.

Positions 3–65 (ARNLMARALY…PGNRVKLLIG (63 aa)) constitute an SH3 domain. Tyr91, Tyr163, Tyr165, Tyr176, Tyr188, Tyr213, and Tyr222 each carry phosphotyrosine. The disordered stretch occupies residues 237–258 (EKEYDFPPPMKQDGKPDTRPEG). Over residues 248-258 (QDGKPDTRPEG) the composition is skewed to basic and acidic residues. Ser295 bears the Phosphoserine mark. Disordered regions lie at residues 297-316 (SLHHAPSQLGQSGDTQSDAY), 326-403 (EVPT…RLRL), and 560-623 (PANS…SERS). Residues 304–314 (QLGQSGDTQSD) are compositionally biased toward polar residues. Residue Tyr316 is modified to Phosphotyrosine. The segment covering 331-343 (TSEKANPEERDGV) has biased composition (basic and acidic residues). The segment at 350–833 (NPADAKGSRD…KRSLLEMATF (484 aa)) is interacts with CTTN. The Caspase cleavage related site motif lies at 359–362 (DVVD). Ser368 is modified (phosphoserine). A compositionally biased stretch (low complexity) spans 368-396 (SFSSTGSTRSNMSTSSTSSKESSLSASPS). Positions 564-586 (HLKNGPNSIMNSSEYTHPGSQMQ) are enriched in polar residues. Positions 709–759 (FYYDQCETHFISLLNAIDALFSCVSSAQPPRIFVAHSKFVILSAHKLVFIG) are divergent helix-loop-helix motif. The tract at residues 709–833 (FYYDQCETHF…KRSLLEMATF (125 aa)) is required for interaction with PLK1. Phosphoserine is present on Ser779. Phosphothreonine is present on Thr803.

This sequence belongs to the CAS family. Homodimer. Forms heterodimers with BCAR1/p130cas. Forms complexes with PTK2B/RAFTK, adapter protein CRKL and LYN kinase. Part of a complex composed of NEDD9, AURKA and CTTN; within the complex NEDD9 acts as a scaffold protein and is required for complex formation. Part of a ternary complex composed of SMAD3, ITCH/AIP4 and NEDD9/HEF1; within the complex NEDD9/HEF1 interacts (via N-terminus) with ITCH/AIP4 (via WW domains); the complex mediates ubiquitination and proteasomal degradation of NEDD9/HEF1. Interacts with SMAD3; the interaction promotes NEDD9 ubiquitination and proteasomal degradation. Interacts with ID2. Interacts with CTTN (via N-terminus). Interacts with MICAL. Interacts with TXNL4/DIM1. Interacts with BCAR3 (via Ras-GEF domain). Interacts with SH2D3C isoform 1 and isoform 2. Interacts with ECT2. Interacts with PTPN11/SHP-2 (via SH2 domains); the interaction is enhanced when NEDD9/CAS-L is tyrosine phosphorylated. Interacts (via C-terminus) with PLK1 (via polo box domains). Interacts with NKX2-5. Interacts with SMAD3; the interaction is inhibited by oxidation of NEDD9. Interacts with NEDD9/HEF1; interaction is induced by CXCL12 promotion of ABL-mediated phosphorylation of NEDD9/HEF1. Interacts (via SH3 domain) with PTK2/FAK. Interacts with FYN; in the presence of PTK2. Interacts with INPPL1/SHIP2. Polyubiquitinated by ITCH/AIP4, leading to proteasomal degradation. Post-translationally, PTK2/FAK1 phosphorylates the protein at the YDYVHL motif (conserved among all cas proteins) following integrin stimulation. The SRC family kinases (FYN, SRC, LCK and CRK) are recruited to the phosphorylated sites and can phosphorylate other tyrosine residues. Ligation of either integrin beta-1 or B-cell antigen receptor on tonsillar B-cells and B-cell lines promotes tyrosine phosphorylation and both integrin and BCR-mediated tyrosine phosphorylation requires an intact actin network. Phosphorylation is required to recruit NEDD9 to T-cell receptor microclusters at the periphery of newly formed immunological synapses. In fibroblasts transformation with oncogene v-ABL results in an increase in tyrosine phosphorylation. Transiently phosphorylated following CD3 cross-linking and this phosphorylated form binds to CRKL and C3G. A mutant lacking the SH3 domain is phosphorylated upon CD3 cross-linking but not upon integrin beta-1 cross-linking. Tyrosine phosphorylation occurs upon stimulation of the G-protein coupled C1a calcitonin receptor. Calcitonin-stimulated tyrosine phosphorylation is mediated by calcium- and protein kinase C-dependent mechanisms and requires the integrity of the actin cytoskeleton. Phosphorylation at Ser-368 induces proteasomal degradation. Phosphorylated by LYN. Phosphorylation at Ser-779 by CSNK1D or CSNK1E, or phosphorylation of Thr-803 by CSNK1E enhances the interaction of NEDD9 with PLK1. In terms of tissue distribution, expressed in splenic lymphocytes (at protein level). Expressed in T-cells (at protein level). Expressed in the thymus. Expressed throughout the brain however particularly abundant in the cortex and hippocampus.

It localises to the cytoplasm. The protein localises to the cell cortex. It is found in the nucleus. Its subcellular location is the golgi apparatus. The protein resides in the cell projection. It localises to the lamellipodium. The protein localises to the cell junction. It is found in the focal adhesion. Its subcellular location is the cytoskeleton. The protein resides in the spindle pole. It localises to the cilium. The protein localises to the cilium basal body. It is found in the basolateral cell membrane. Scaffolding protein which plays a central coordinating role for tyrosine-kinase-based signaling related to cell adhesion. As a focal adhesion protein, plays a role in embryonic fibroblast migration. May play an important role in integrin beta-1 or B cell antigen receptor (BCR) mediated signaling in B- and T-cells. Integrin beta-1 stimulation leads to recruitment of various proteins including CRKl and SHPTP2 to the tyrosine phosphorylated form. Promotes adhesion and migration of lymphocytes; as a result required for the correct migration of lymphocytes to the spleen and other secondary lymphoid organs. Plays a role in the organization of T-cell F-actin cortical cytoskeleton and the centralization of T-cell receptor microclusters at the immunological synapse. Negatively regulates cilia outgrowth in polarized cysts. Modulates cilia disassembly via activation of AURKA-mediated phosphorylation of HDAC6 and subsequent deacetylation of alpha-tubulin. Positively regulates RANKL-induced osteoclastogenesis. Required for the maintenance of hippocampal dendritic spines in the dentate gyrus and CA1 regions, thereby involved in spatial learning and memory. The polypeptide is Enhancer of filamentation 1 (Mus musculus (Mouse)).